We begin with the raw amino-acid sequence, 475 residues long: AP-1 complex subunit mu-1-I (475 aa).

In terms of domain architecture, MHD spans 175-473; that stretch reads KNEAFLDIVE…TQSGDDYTIR (299 aa). The interval 240 to 262 is disordered; that stretch reads ASATTSDNNTETDKKPSITSSSA.

This sequence belongs to the adaptor complexes medium subunit family. In terms of assembly, adaptor protein complex 1 (AP-1) is a heterotetramer composed of two large adaptins (gamma-type subunit APL4 and beta-type subunit APL2), a medium adaptin (mu-type subunit APM1) and a small adaptin (sigma-type subunit APS1). AP-1 interacts with clathrin.

It is found in the cytoplasmic vesicle. The protein resides in the clathrin-coated vesicle membrane. It localises to the membrane. The protein localises to the clathrin-coated pit. In terms of biological role, component of the adaptor complexes which link clathrin to receptors in coated vesicles. Clathrin-associated protein complexes are believed to interact with the cytoplasmic tails of membrane proteins, leading to their selection and concentration. The AP-1 complex interacts directly with clathrin. AP57 is probably a subunit of the Golgi membrane adaptor. This Saccharomyces cerevisiae (strain ATCC 204508 / S288c) (Baker's yeast) protein is AP-1 complex subunit mu-1-I (APM1).